We begin with the raw amino-acid sequence, 338 residues long: Large ribosomal subunit protein uL10 (338 aa).

Residues 302 to 338 (IAAQPQPAEEAEEKVEEEEEEEKEEEEALAGLGALFG) are disordered. The span at 310-329 (EEAEEKVEEEEEEEKEEEEA) shows a compositional bias: acidic residues.

Belongs to the universal ribosomal protein uL10 family. Part of the 50S ribosomal subunit. Forms part of the ribosomal stalk which helps the ribosome interact with GTP-bound translation factors. Forms a heptameric L10(L12)2(L12)2(L12)2 complex, where L10 forms an elongated spine to which the L12 dimers bind in a sequential fashion.

Its function is as follows. Forms part of the ribosomal stalk, playing a central role in the interaction of the ribosome with GTP-bound translation factors. The protein is Large ribosomal subunit protein uL10 of Thermococcus sibiricus (strain DSM 12597 / MM 739).